A 203-amino-acid polypeptide reads, in one-letter code: Endo-type membrane-bound lytic murein transglycosylase A (203 aa).

The signal sequence occupies residues 1 to 15; that stretch reads MKLRWFAFLIVLLAG. Cys16 carries the N-palmitoyl cysteine lipid modification. Cys16 is lipidated: S-diacylglycerol cysteine.

This sequence belongs to the transglycosylase Slt family.

The protein localises to the cell outer membrane. The enzyme catalyses Endolytic cleavage of the (1-&gt;4)-beta-glycosidic linkage between N-acetylmuramic acid (MurNAc) and N-acetylglucosamine (GlcNAc) residues in peptidoglycan with concomitant formation of a 1,6-anhydrobond in the MurNAc residue.. Its function is as follows. Murein-degrading enzyme. May play a role in recycling of muropeptides during cell elongation and/or cell division. Preferentially cleaves at a distance of more than two disaccharide units from the ends of the glycan chain. This is Endo-type membrane-bound lytic murein transglycosylase A from Shigella boydii serotype 4 (strain Sb227).